The primary structure comprises 519 residues: Membrane-bound glycerophospholipid O-acyltransferase 2 (519 aa).

A run of 6 helical transmembrane segments spans residues 22–42 (PIDQ…AVWF), 61–81 (TLLG…HFLV), 88–108 (CIMI…FALG), 184–204 (FMGI…FIEG), 236–256 (LLVC…LPVE), and 263–283 (FQAT…LLAA). Active-site residues include asparagine 341 and histidine 372. The next 3 helical transmembrane spans lie at 365–385 (FFLS…FLTG), 415–435 (LITW…FVLL), and 443–463 (FYSS…LLLP). Positions 497-519 (FSTMNNVCNQNRDTGSRHSSLTQ) are disordered.

Belongs to the membrane-bound acyltransferase family. As to expression, highly expressed in epididymis, brain, testis, and ovary.

It is found in the endoplasmic reticulum membrane. The enzyme catalyses a 1-acyl-sn-glycero-3-phosphocholine + an acyl-CoA = a 1,2-diacyl-sn-glycero-3-phosphocholine + CoA. The catalysed reaction is a 1-acyl-sn-glycero-3-phosphoethanolamine + an acyl-CoA = a 1,2-diacyl-sn-glycero-3-phosphoethanolamine + CoA. It catalyses the reaction a 1-O-(1Z-alkenyl)-sn-glycero-3-phosphocholine + (9Z)-octadecenoyl-CoA = 1-O-(1Z)-alkenyl-2-(9Z)-octadecenoyl-sn-glycero-3-phosphocholine + CoA. It carries out the reaction a 1-O-(1Z-alkenyl)-sn-glycero-3-phosphoethanolamine + (9Z)-octadecenoyl-CoA = 1-O-(1Z)-alkenyl-2-(9Z)-octadecenoyl-sn-glycero-3-phosphoethanolamine + CoA. The enzyme catalyses 1-octadecanoyl-sn-glycero-3-phosphoethanolamine + (9Z)-octadecenoyl-CoA = 1-octadecanoyl-2-(9Z-octadecenoyl)-sn-glycero-3-phosphoethanolamine + CoA. The catalysed reaction is 1-octadecanoyl-sn-glycero-3-phosphocholine + (9Z)-octadecenoyl-CoA = 1-octadecanoyl-2-(9Z-octadecenoyl)-sn-glycero-3-phosphocholine + CoA. It catalyses the reaction 1-(9Z-octadecenoyl)-sn-glycero-3-phosphoethanolamine + (9Z)-octadecenoyl-CoA = 1,2-di-(9Z-octadecenoyl)-sn-glycero-3-phosphoethanolamine + CoA. It carries out the reaction 1-hexadecanoyl-sn-glycero-3-phosphoethanolamine + (9Z)-octadecenoyl-CoA = 1-hexadecanoyl-2-(9Z-octadecenoyl)-sn-glycero-3-phosphoethanolamine + CoA. The enzyme catalyses 1-hexadecanoyl-sn-glycero-3-phosphocholine + (9Z)-octadecenoyl-CoA = 1-hexadecanoyl-2-(9Z-octadecenoyl)-sn-glycero-3-phosphocholine + CoA. The catalysed reaction is (9Z)-hexadecenoyl-CoA + 1-hexadecanoyl-sn-glycero-3-phosphocholine = 1-hexadecanoyl-2-(9Z-hexadecenoyl)-sn-glycero-3-phosphocholine + CoA. It catalyses the reaction 1-hexadecanoyl-sn-glycero-3-phosphoethanolamine + (9Z)-hexadecenoyl-CoA = 1-hexadecanoyl-2-(9Z)-hexadecenoyl-sn-glycero-3-phosphoethanolamine + CoA. It carries out the reaction (9Z,12Z)-octadecadienoyl-CoA + 1-hexadecanoyl-sn-glycero-3-phosphocholine = 1-hexadecanoyl-2-(9Z,12Z-octadecadienoyl)-sn-glycero-3-phosphocholine + CoA. It functions in the pathway lipid metabolism; phospholipid metabolism. Partially inhibited by thimerosal. Acyltransferase which catalyzes the transfer of an acyl group from an acyl-CoA to a lysophospholipid leading to the production of a phospholipid and participates in the reacylation step of the phospholipid remodeling pathway also known as the Lands cycle. Catalyzes the acylation of lysophosphatidylcholine (1-acyl-sn-glycero-3-phosphocholine or LPC) and to a lesser extend lysophosphatidylethanolamine (1-acyl-sn-glycero-3-phosphoethanolamine or LPE). Does not acylates lysophosphatidic acid (LPA) and lysophosphatidylserine. Prefers oleoyl-CoA as the acyl donor. May be involved in chondrocyte differentiation. The protein is Membrane-bound glycerophospholipid O-acyltransferase 2 of Mus musculus (Mouse).